Consider the following 1025-residue polypeptide: Multidrug resistance protein MdtC (1025 aa).

A run of 12 helical transmembrane segments spans residues 3-23 (FFAL…AITL), 333-353 (EVEQ…FLFL), 360-380 (IIPA…MYLC), 387-407 (LSLM…IVVL), 431-451 (VGFT…PLLL), 463-483 (FAVT…TLTP), 528-548 (LVGV…ISIP), 853-873 (VILI…LYES), 875-895 (VHPL…LLAL), 897-917 (LFNA…IGIV), 953-973 (PIMM…LSGG), and 984-1004 (ITIV…TPVV).

The protein belongs to the resistance-nodulation-cell division (RND) (TC 2.A.6) family. MdtC subfamily. Part of a tripartite efflux system composed of MdtA, MdtB and MdtC. MdtC forms a heteromultimer with MdtB.

It is found in the cell inner membrane. The MdtABC tripartite complex confers resistance against novobiocin and deoxycholate. This is Multidrug resistance protein MdtC from Escherichia coli O7:K1 (strain IAI39 / ExPEC).